The following is a 31-amino-acid chain: Hyaluronidase (31 aa).

The protein belongs to the glycosyl hydrolase 56 family. Post-translationally, contains 2 disulfide bonds. N-glycosylated on at least two Asn residues by identical heptasaccharide units composed of Man, GlcNAc, and Fuc residues in the molar ration of 3:2:2. In terms of tissue distribution, expressed by the venom gland.

The protein resides in the secreted. It catalyses the reaction Random hydrolysis of (1-&gt;4)-linkages between N-acetyl-beta-D-glucosamine and D-glucuronate residues in hyaluronate.. Hydrolyzes high molecular weight hyaluronic acid to produce small oligosaccharides. This chain is Hyaluronidase, found in Vespula maculifrons (Eastern yellow jacket).